Consider the following 249-residue polypeptide: Proteasome subunit alpha type-3 (249 aa).

An N-acetylserine modification is found at serine 2. Serine 214 and serine 220 each carry O-acetylserine. Lysine 221 is covalently cross-linked (Glycyl lysine isopeptide (Lys-Gly) (interchain with G-Cter in ubiquitin)).

Belongs to the peptidase T1A family. As to quaternary structure, component of the 20S core complex of the 26S proteasome. The 26S proteasome is composed of a core protease (CP), known as the 20S proteasome, capped at one or both ends by the 19S regulatory particle (RP/PA700). The 20S proteasome core is composed of 28 subunits that are arranged in four stacked rings, resulting in a barrel-shaped structure. The two end rings are each formed by seven alpha subunits, and the two central rings are each formed by seven beta subunits. The catalytic chamber with the active sites is on the inside of the barrel. In terms of tissue distribution, ubiquitous low levels.

It localises to the cytoplasm. The protein localises to the nucleus. Functionally, the proteasome is a multicatalytic proteinase complex which is characterized by its ability to cleave peptides with Arg, Phe, Tyr, Leu, and Glu adjacent to the leaving group at neutral or slightly basic pH. The proteasome has an ATP-dependent proteolytic activity. In Arabidopsis thaliana (Mouse-ear cress), this protein is Proteasome subunit alpha type-3 (PAG1).